Consider the following 600-residue polypeptide: Aspartate--tRNA(Asp/Asn) ligase (600 aa).

Residue Glu-187 coordinates L-aspartate. Positions 211 to 214 (QIFK) are aspartate. Arg-233 and His-463 together coordinate L-aspartate. 233–235 (RDE) contacts ATP. Glu-497 lines the ATP pocket. An L-aspartate-binding site is contributed by Arg-504. 549–552 (GVDR) serves as a coordination point for ATP.

This sequence belongs to the class-II aminoacyl-tRNA synthetase family. Type 1 subfamily. In terms of assembly, homodimer.

Its subcellular location is the cytoplasm. It carries out the reaction tRNA(Asx) + L-aspartate + ATP = L-aspartyl-tRNA(Asx) + AMP + diphosphate. In terms of biological role, aspartyl-tRNA synthetase with relaxed tRNA specificity since it is able to aspartylate not only its cognate tRNA(Asp) but also tRNA(Asn). Reaction proceeds in two steps: L-aspartate is first activated by ATP to form Asp-AMP and then transferred to the acceptor end of tRNA(Asp/Asn). This is Aspartate--tRNA(Asp/Asn) ligase from Wolbachia pipientis subsp. Culex pipiens (strain wPip).